Here is a 219-residue protein sequence, read N- to C-terminus: Transcriptional regulatory protein QseB (219 aa).

One can recognise a Response regulatory domain in the interval 2–116; sequence RILLIEDDML…EVAARLEALM (115 aa). At aspartate 51 the chain carries 4-aspartylphosphate. Residues 124–218 constitute a DNA-binding region (ompR/PhoB-type); it reads SNELRHGNVM…VHGIGYTLGE (95 aa).

In terms of processing, phosphorylated by QseC.

The protein resides in the cytoplasm. Its function is as follows. Member of a two-component regulatory system QseB/QseC. Activates the flagella regulon by activating transcription of FlhDC. Currently it is not known whether this effect is direct or not. The protein is Transcriptional regulatory protein QseB (qseB) of Escherichia coli O157:H7.